The primary structure comprises 348 residues: Phospho-2-dehydro-3-deoxyheptonate aldolase, Trp-sensitive (348 aa).

It belongs to the class-I DAHP synthase family.

It catalyses the reaction D-erythrose 4-phosphate + phosphoenolpyruvate + H2O = 7-phospho-2-dehydro-3-deoxy-D-arabino-heptonate + phosphate. It participates in metabolic intermediate biosynthesis; chorismate biosynthesis; chorismate from D-erythrose 4-phosphate and phosphoenolpyruvate: step 1/7. Its function is as follows. Stereospecific condensation of phosphoenolpyruvate (PEP) and D-erythrose-4-phosphate (E4P) giving rise to 3-deoxy-D-arabino-heptulosonate-7-phosphate (DAHP). This Escherichia coli (strain K12) protein is Phospho-2-dehydro-3-deoxyheptonate aldolase, Trp-sensitive (aroH).